Here is a 187-residue protein sequence, read N- to C-terminus: Protein GrpE (187 aa).

The disordered stretch occupies residues 1-30 (MEKKETKNETEKTNKQDNKNTKSQKKENLN).

It belongs to the GrpE family. As to quaternary structure, homodimer.

Its subcellular location is the cytoplasm. Its function is as follows. Participates actively in the response to hyperosmotic and heat shock by preventing the aggregation of stress-denatured proteins, in association with DnaK and GrpE. It is the nucleotide exchange factor for DnaK and may function as a thermosensor. Unfolded proteins bind initially to DnaJ; upon interaction with the DnaJ-bound protein, DnaK hydrolyzes its bound ATP, resulting in the formation of a stable complex. GrpE releases ADP from DnaK; ATP binding to DnaK triggers the release of the substrate protein, thus completing the reaction cycle. Several rounds of ATP-dependent interactions between DnaJ, DnaK and GrpE are required for fully efficient folding. The protein is Protein GrpE of Borreliella afzelii (strain PKo) (Borrelia afzelii).